We begin with the raw amino-acid sequence, 1072 residues long: DNA-directed RNA polymerase subunit beta (1072 aa).

It belongs to the RNA polymerase beta chain family. As to quaternary structure, in plastids the minimal PEP RNA polymerase catalytic core is composed of four subunits: alpha, beta, beta', and beta''. When a (nuclear-encoded) sigma factor is associated with the core the holoenzyme is formed, which can initiate transcription.

It is found in the plastid. The protein localises to the chloroplast. The enzyme catalyses RNA(n) + a ribonucleoside 5'-triphosphate = RNA(n+1) + diphosphate. DNA-dependent RNA polymerase catalyzes the transcription of DNA into RNA using the four ribonucleoside triphosphates as substrates. This is DNA-directed RNA polymerase subunit beta from Barbarea verna (Land cress).